The primary structure comprises 162 residues: Small ribosomal subunit protein uS5 (162 aa).

Positions 7–70 (EEKMILIRRT…YARRNMVEVP (64 aa)) constitute an S5 DRBM domain.

This sequence belongs to the universal ribosomal protein uS5 family. As to quaternary structure, part of the 30S ribosomal subunit. Contacts proteins S4 and S8.

In terms of biological role, with S4 and S12 plays an important role in translational accuracy. Located at the back of the 30S subunit body where it stabilizes the conformation of the head with respect to the body. The chain is Small ribosomal subunit protein uS5 (rpsE) from Thermus thermophilus (strain ATCC BAA-163 / DSM 7039 / HB27).